The sequence spans 173 residues: Large ribosomal subunit protein uL5 (173 aa).

This sequence belongs to the universal ribosomal protein uL5 family. In terms of assembly, component of the large ribosomal subunit.

Its subcellular location is the nucleus. The protein localises to the cytoplasm. Its function is as follows. Component of the ribosome, a large ribonucleoprotein complex responsible for the synthesis of proteins in the cell. The small ribosomal subunit (SSU) binds messenger RNAs (mRNAs) and translates the encoded message by selecting cognate aminoacyl-transfer RNA (tRNA) molecules. The large subunit (LSU) contains the ribosomal catalytic site termed the peptidyl transferase center (PTC), which catalyzes the formation of peptide bonds, thereby polymerizing the amino acids delivered by tRNAs into a polypeptide chain. The nascent polypeptides leave the ribosome through a tunnel in the LSU and interact with protein factors that function in enzymatic processing, targeting, and the membrane insertion of nascent chains at the exit of the ribosomal tunnel. The chain is Large ribosomal subunit protein uL5 (RPL11) from Encephalitozoon cuniculi (strain GB-M1) (Microsporidian parasite).